A 287-amino-acid polypeptide reads, in one-letter code: GTPase Era (287 aa).

Positions 6 to 178 (FSGTSVIIGK…IQNKLKIVPK (173 aa)) constitute an Era-type G domain. The interval 14–21 (GKPNVGKS) is G1. 14 to 21 (GKPNVGKS) is a binding site for GTP. The G2 stretch occupies residues 40–44 (HTTQS). The G3 stretch occupies residues 62–65 (DTPG). GTP-binding positions include 62-66 (DTPGI) and 124-127 (NKID). Positions 124–127 (NKID) are G4. The G5 stretch occupies residues 154–156 (ISG). The KH type-2 domain maps to 207–282 (LGDELPYSIQ…SIYLSLKVIK (76 aa)).

Belongs to the TRAFAC class TrmE-Era-EngA-EngB-Septin-like GTPase superfamily. Era GTPase family. Monomer.

It localises to the cytoplasm. The protein localises to the cell membrane. An essential GTPase that binds both GDP and GTP, with rapid nucleotide exchange. Plays a role in 16S rRNA processing and 30S ribosomal subunit biogenesis and possibly also in cell cycle regulation and energy metabolism. The protein is GTPase Era of Buchnera aphidicola subsp. Baizongia pistaciae (strain Bp).